The chain runs to 529 residues: Isoleucine--tRNA ligase (529 aa).

Residue E482 participates in L-isoleucyl-5'-AMP binding. The 'KMSKS' region motif lies at 523-527; it reads KMSKS. K526 serves as a coordination point for ATP.

The protein belongs to the class-I aminoacyl-tRNA synthetase family. IleS type 1 subfamily. As to quaternary structure, monomer.

It localises to the cytoplasm. It carries out the reaction tRNA(Ile) + L-isoleucine + ATP = L-isoleucyl-tRNA(Ile) + AMP + diphosphate. Catalyzes the attachment of isoleucine to tRNA(Ile). As IleRS can inadvertently accommodate and process structurally similar amino acids such as valine, to avoid such errors it has two additional distinct tRNA(Ile)-dependent editing activities. One activity is designated as 'pretransfer' editing and involves the hydrolysis of activated Val-AMP. The other activity is designated 'posttransfer' editing and involves deacylation of mischarged Val-tRNA(Ile). In Aquifex pyrophilus, this protein is Isoleucine--tRNA ligase (ileS).